The following is a 425-amino-acid chain: Serine--tRNA ligase (425 aa).

An L-serine-binding site is contributed by Thr231–Glu233. Arg262 to Glu264 contacts ATP. An L-serine-binding site is contributed by Glu285. Glu349–Ser352 is a binding site for ATP. Ser385 contacts L-serine.

This sequence belongs to the class-II aminoacyl-tRNA synthetase family. Type-1 seryl-tRNA synthetase subfamily. As to quaternary structure, homodimer. The tRNA molecule binds across the dimer.

The protein localises to the cytoplasm. The catalysed reaction is tRNA(Ser) + L-serine + ATP = L-seryl-tRNA(Ser) + AMP + diphosphate + H(+). It carries out the reaction tRNA(Sec) + L-serine + ATP = L-seryl-tRNA(Sec) + AMP + diphosphate + H(+). It participates in aminoacyl-tRNA biosynthesis; selenocysteinyl-tRNA(Sec) biosynthesis; L-seryl-tRNA(Sec) from L-serine and tRNA(Sec): step 1/1. Catalyzes the attachment of serine to tRNA(Ser). Is also able to aminoacylate tRNA(Sec) with serine, to form the misacylated tRNA L-seryl-tRNA(Sec), which will be further converted into selenocysteinyl-tRNA(Sec). The sequence is that of Serine--tRNA ligase from Bartonella henselae (strain ATCC 49882 / DSM 28221 / CCUG 30454 / Houston 1) (Rochalimaea henselae).